The chain runs to 87 residues: Neurotoxin LmNaTx64.1 (87 aa).

An N-terminal signal peptide occupies residues 1–18; it reads MKILFLIILTAFFIGVHC. An LCN-type CS-alpha/beta domain is found at 19–85; the sequence is KHGYPIIRAG…TWSRATNKCK (67 aa). Disulfide bonds link Cys33–Cys84, Cys37–Cys58, Cys44–Cys65, and Cys48–Cys67. A Cysteine amide modification is found at Cys84.

The protein belongs to the long (4 C-C) scorpion toxin superfamily. Sodium channel inhibitor family. Beta subfamily. In terms of tissue distribution, expressed by the venom gland.

The protein localises to the secreted. In terms of biological role, binds voltage-independently at site-4 of sodium channels (Nav) and shift the voltage of activation toward more negative potentials thereby affecting sodium channel activation and promoting spontaneous and repetitive firing. The chain is Neurotoxin LmNaTx64.1 from Lychas mucronatus (Chinese swimming scorpion).